We begin with the raw amino-acid sequence, 171 residues long: Fetal and adult testis-expressed transcript protein homolog (171 aa).

Disordered stretches follow at residues 1 to 27 (MAGGSTNTKKIEMSLAEELVPKSQEPS) and 68 to 92 (ANKSKKTGPQLPPKKASQEPNQEGG). The helical transmembrane segment at 151–169 (TLFFTMLVSVCVANLWLWL) threads the bilayer.

As to quaternary structure, interacts with BIK and RNF183. Interacts with IMMT/MIC60and EMD.

Its subcellular location is the mitochondrion. It is found in the mitochondrion outer membrane. The protein resides in the endoplasmic reticulum membrane. Its function is as follows. Involved in the regulation of endoplasmic reticulum (ER)-mitochondria coupling. Negatively regulates the ER-mitochondria distance and Ca(2+) transfer from ER to mitochondria possibly implicating it in the regulation of apoptosis. May collaborate with RNF183 to restrain BIK protein levels thus regulating apoptotic signaling. The protein is Fetal and adult testis-expressed transcript protein homolog (FATE1) of Sus scrofa (Pig).